The chain runs to 455 residues: Phosphoglucosamine mutase (455 aa).

Ser-104 serves as the catalytic Phosphoserine intermediate. Residues Ser-104, Asp-253, Asp-255, and Asp-257 each coordinate Mg(2+). At Ser-104 the chain carries Phosphoserine.

This sequence belongs to the phosphohexose mutase family. The cofactor is Mg(2+). In terms of processing, activated by phosphorylation.

It carries out the reaction alpha-D-glucosamine 1-phosphate = D-glucosamine 6-phosphate. Its function is as follows. Catalyzes the conversion of glucosamine-6-phosphate to glucosamine-1-phosphate. The sequence is that of Phosphoglucosamine mutase from Psychrobacter arcticus (strain DSM 17307 / VKM B-2377 / 273-4).